We begin with the raw amino-acid sequence, 190 residues long: Adenylate kinase (190 aa).

Position 11-16 (11-16) interacts with ATP; it reads GAGKGT. Residues 31–60 form an NMP region; sequence STGDIFRFNIKNETELGKLAKTFMDKGDLV. AMP-binding positions include T32, R37, 58–60, 86–89, and Q93; these read DLV and GFPR. Residues 127-137 form an LID region; it reads ERGKTSGRVDD. R128 serves as a coordination point for ATP. Residues R134 and R146 each contribute to the AMP site. Residue G174 coordinates ATP.

The protein belongs to the adenylate kinase family. Monomer.

It is found in the cytoplasm. It catalyses the reaction AMP + ATP = 2 ADP. Its pathway is purine metabolism; AMP biosynthesis via salvage pathway; AMP from ADP: step 1/1. Functionally, catalyzes the reversible transfer of the terminal phosphate group between ATP and AMP. Plays an important role in cellular energy homeostasis and in adenine nucleotide metabolism. The protein is Adenylate kinase of Flavobacterium psychrophilum (strain ATCC 49511 / DSM 21280 / CIP 103535 / JIP02/86).